We begin with the raw amino-acid sequence, 98 residues long: Homeobox protein Ht-En (98 aa).

Residues 3-62 (EKRPRTAFTGDQLARLKREFSENKYLTEQRRTCLAKELNLNESQIKIWFQNKRAKMKKAS) constitute a DNA-binding region (homeobox). The segment at 79-98 (NHSSSSSSSSSSSSSIFLLA) is disordered. Positions 81 to 98 (SSSSSSSSSSSSSIFLLA) are enriched in low complexity.

The protein belongs to the engrailed homeobox family. Phosphorylated in the Ser-rich domain.

Its subcellular location is the nucleus. In terms of biological role, this protein specifies the body segmentation pattern. This Helobdella triserialis (Leech) protein is Homeobox protein Ht-En (HT-EN).